Reading from the N-terminus, the 454-residue chain is tRNA modification GTPase MnmE (454 aa).

Positions 23, 80, and 120 each coordinate (6S)-5-formyl-5,6,7,8-tetrahydrofolate. Residues 216-377 (GMKVVIAGRP…LRDHLKQSMG (162 aa)) form the TrmE-type G domain. N226 serves as a coordination point for K(+). GTP contacts are provided by residues 226 to 231 (NAGKSS), 245 to 251 (TDIAGTT), 270 to 273 (DTAG), 335 to 338 (NKAD), and 358 to 360 (SAR). S230 lines the Mg(2+) pocket. Residues T245, I247, and T250 each coordinate K(+). T251 contacts Mg(2+). K454 lines the (6S)-5-formyl-5,6,7,8-tetrahydrofolate pocket.

Belongs to the TRAFAC class TrmE-Era-EngA-EngB-Septin-like GTPase superfamily. TrmE GTPase family. Homodimer. Heterotetramer of two MnmE and two MnmG subunits. K(+) serves as cofactor.

It localises to the cytoplasm. Exhibits a very high intrinsic GTPase hydrolysis rate. Involved in the addition of a carboxymethylaminomethyl (cmnm) group at the wobble position (U34) of certain tRNAs, forming tRNA-cmnm(5)s(2)U34. This is tRNA modification GTPase MnmE from Serratia proteamaculans (strain 568).